Here is a 388-residue protein sequence, read N- to C-terminus: MSQVIFSVDRGGAEPGAEMDDEMTLNMGPHHPSTHGVLRFVISTDGEIIRKAVPDVGYLHRSIEKIGERCTYSGFMPYTDRVDYIAAMFANEAWASACEKLMGIEVPKRAQYLRVISCELNRIGSHMIALGAMAMDVGAVTPFPWALREREYINDFIEELCGARLTFNYHRIGGVSFDMPKGWADKVKHWLDRFEPIMVEFDRLISLNDIFIKRLANVAVVTAEEAKDWGLVGPNLRGSGVKWDLRKEDAYSVYPELEFDVPVGRGRYGTVGDCWDRFYVRVEECRESAKILRQALDKIDEHPEDDILGKLPKKMRPDGEAYARIESARGDMGCYVIGRGAEEAYRARFRTGSFTAMAMIEAKSPGLFLADLVALIASFDVVAPEIDR.

This sequence belongs to the complex I 49 kDa subunit family. NDH-1 is composed of 14 different subunits. Subunits NuoB, C, D, E, F, and G constitute the peripheral sector of the complex.

It is found in the cell inner membrane. The catalysed reaction is a quinone + NADH + 5 H(+)(in) = a quinol + NAD(+) + 4 H(+)(out). NDH-1 shuttles electrons from NADH, via FMN and iron-sulfur (Fe-S) centers, to quinones in the respiratory chain. The immediate electron acceptor for the enzyme in this species is believed to be ubiquinone. Couples the redox reaction to proton translocation (for every two electrons transferred, four hydrogen ions are translocated across the cytoplasmic membrane), and thus conserves the redox energy in a proton gradient. The sequence is that of NADH-quinone oxidoreductase subunit D 2 from Sorangium cellulosum (strain So ce56) (Polyangium cellulosum (strain So ce56)).